Here is a 432-residue protein sequence, read N- to C-terminus: Cytochrome c biogenesis protein CcsB (432 aa).

Transmembrane regions (helical) follow at residues 14-34 (LRIAIGLLFVIALSSALGTAI), 72-92 (SSWFLALLAWLGLALILCSWR), and 162-182 (VGPMLVHLGLVLLMLGAVWGS).

Belongs to the Ccs1/CcsB family. As to quaternary structure, may interact with CcsA.

The protein localises to the cellular thylakoid membrane. Functionally, required during biogenesis of c-type cytochromes (cytochrome c6 and cytochrome f) at the step of heme attachment. The polypeptide is Cytochrome c biogenesis protein CcsB (Prochlorococcus marinus (strain MIT 9303)).